Consider the following 617-residue polypeptide: uncharacterized protein (617 aa).

Residues 33–134 (TEDDFRGEKF…FXNATKQKGS (102 aa)) enclose the B12-binding N-terminal domain. Methylcob(III)alamin contacts are provided by residues Glu-84, 146–150 (GDVHD), His-149, Ser-194, Thr-198, and Ala-251. Positions 136 to 272 (NGKVVIATVK…NPEGRAALWE (137 aa)) constitute a B12-binding domain. Residues 288–617 (SKPLRKQLSI…MMKWLGVAMK (330 aa)) enclose the AdoMet activation domain. Residues Asp-337, Arg-528, and 583 to 584 (YF) each bind S-adenosyl-L-methionine.

Belongs to the vitamin-B12 dependent methionine synthase family.

This is an uncharacterized protein from Haemophilus influenzae (strain ATCC 51907 / DSM 11121 / KW20 / Rd).